An 814-amino-acid chain; its full sequence is Syn-copalyl diphosphate synthase TPS3, chloroplastic (814 aa).

The transit peptide at 1–52 (MCSLSTLSPNFSNAYGSKSVSSTASRFPCWQRSNETWKTQSREVIHWTYVVR) directs the protein to the chloroplast. Substrate is bound at residue K248. Mg(2+)-binding residues include D386 and D388. The short motif at 386-389 (DIDD) is the DXDD motif element. Position 472 (K472) interacts with substrate.

This sequence belongs to the terpene synthase family. Mg(2+) serves as cofactor. In terms of tissue distribution, mostly expressed in trichomes of leaves and fruits.

It is found in the plastid. The protein resides in the chloroplast. The enzyme catalyses (2E,6E,10E)-geranylgeranyl diphosphate = 9alpha-copalyl diphosphate. It participates in secondary metabolite biosynthesis; terpenoid biosynthesis. Involved in the biosynthesis of labdane-type diterpenoid including cleroda-dienols, and peregrinol lactones and furan derivatives, dopaminergic diterpenoids that can bind to dopamine receptors in the human pituitary gland, have probably ability to lower prolactin levels, and are used to treat menstrual cycle disorders (e.g. premenstrual syndrome and mastodynia). Terpene synthase that produces syn-copalyl diphosophate from geranylgeranyl diphosphate (GGPP). The chain is Syn-copalyl diphosphate synthase TPS3, chloroplastic from Vitex agnus-castus (Chaste tree).